Reading from the N-terminus, the 504-residue chain is Maturase K (504 aa).

It belongs to the intron maturase 2 family. MatK subfamily.

It is found in the plastid. It localises to the chloroplast. Usually encoded in the trnK tRNA gene intron. Probably assists in splicing its own and other chloroplast group II introns. The polypeptide is Maturase K (Cynophalla hastata (Broadleaf caper)).